The following is a 166-amino-acid chain: Protein UTR5 (166 aa).

This chain is Protein UTR5 (UTR5), found in Saccharomyces cerevisiae (strain ATCC 204508 / S288c) (Baker's yeast).